The sequence spans 523 residues: UDP-glucuronosyltransferase 3A1 (523 aa).

An N-terminal signal peptide occupies residues 1-23; the sequence is MAVGRKSLILSLLIQHFVLLHGA. At 24–483 the chain is on the extracellular side; that stretch reads KILTVCFLGG…YSYQQPLYQQ (460 aa). The N-linked (GlcNAc...) asparagine glycan is linked to Asn125. A helical transmembrane segment spans residues 484–504; sequence YLLDVFLFVCVCVIGACYLTV. At 505 to 523 the chain is on the cytoplasmic side; the sequence is KLLKMFIQKLCSFRKLKQN.

This sequence belongs to the UDP-glycosyltransferase family.

Its subcellular location is the membrane. The enzyme catalyses glucuronate acceptor + UDP-alpha-D-glucuronate = acceptor beta-D-glucuronoside + UDP + H(+). In terms of biological role, UDP-glucuronosyltransferases catalyze phase II biotransformation reactions in which lipophilic substrates are conjugated with glucuronic acid to increase water solubility and enhance excretion. They are of major importance in the conjugation and subsequent elimination of potentially toxic xenobiotics and endogenous compounds. The sequence is that of UDP-glucuronosyltransferase 3A1 (ugt3a1) from Xenopus laevis (African clawed frog).